The chain runs to 255 residues: uncharacterized protein (255 aa).

The protein belongs to the methyltransferase superfamily.

This is an uncharacterized protein from Mycobacterium marinum (strain ATCC BAA-535 / M).